Reading from the N-terminus, the 121-residue chain is Large ribosomal subunit protein bL12 (121 aa).

Belongs to the bacterial ribosomal protein bL12 family. Homodimer. Part of the ribosomal stalk of the 50S ribosomal subunit. Forms a multimeric L10(L12)X complex, where L10 forms an elongated spine to which 2 to 4 L12 dimers bind in a sequential fashion. Binds GTP-bound translation factors.

In terms of biological role, forms part of the ribosomal stalk which helps the ribosome interact with GTP-bound translation factors. Is thus essential for accurate translation. The protein is Large ribosomal subunit protein bL12 of Leuconostoc mesenteroides subsp. mesenteroides (strain ATCC 8293 / DSM 20343 / BCRC 11652 / CCM 1803 / JCM 6124 / NCDO 523 / NBRC 100496 / NCIMB 8023 / NCTC 12954 / NRRL B-1118 / 37Y).